The primary structure comprises 299 residues: GDNF family receptor alpha-4 (299 aa).

Residues 1 to 20 (MVRCLGPALLLLLLLGSASS) form the signal peptide. Residues 145 to 198 (RGLSPAHRPPAAQASPPGLSGLVHPSAQRPRRLPAGPGRPLPARLRGPRGVPAG) form a disordered region. The segment covering 177-198 (LPAGPGRPLPARLRGPRGVPAG) has biased composition (low complexity). Residue Asn208 is glycosylated (N-linked (GlcNAc...) asparagine). Residue Gly278 is the site of GPI-anchor amidated glycine attachment. Positions 279 to 299 (RALERRSLLSILPVLALPALL) are cleaved as a propeptide — removed in mature form.

It belongs to the GDNFR family. As to quaternary structure, interacts with ARTN ligand and RET: forms a 2:2:2 ternary complex composed of ARTN ligand, GFRA3 and RET receptor. Interacts with SORL1. As to expression, predominantly expressed in the adult thyroid gland. Low levels also found in fetal adrenal and thyroid glands.

The protein resides in the cell membrane. Its subcellular location is the secreted. In terms of biological role, receptor for persephin (PSPN), a growth factor that exhibits neurotrophic activity on mesencephalic dopaminergic and motor neurons. Acts by binding to its coreceptor, GFRA4, leading to autophosphorylation and activation of the RET receptor. May be important in C-cell development and, in the postnatal development of the adrenal medulla. In Homo sapiens (Human), this protein is GDNF family receptor alpha-4 (GFRA4).